The primary structure comprises 230 residues: Flagellar L-ring protein (230 aa).

The N-terminal stretch at 1 to 16 is a signal peptide; the sequence is MYLVFGIIFTSVIVTS. C17 carries the N-palmitoyl cysteine lipid modification. C17 carries the S-diacylglycerol cysteine lipid modification.

Belongs to the FlgH family. As to quaternary structure, the basal body constitutes a major portion of the flagellar organelle and consists of four rings (L,P,S, and M) mounted on a central rod.

Its subcellular location is the cell outer membrane. The protein resides in the bacterial flagellum basal body. Its function is as follows. Assembles around the rod to form the L-ring and probably protects the motor/basal body from shearing forces during rotation. This chain is Flagellar L-ring protein, found in Bartonella bacilliformis (strain ATCC 35685 / KC583 / Herrer 020/F12,63).